We begin with the raw amino-acid sequence, 248 residues long: Putative imidazole glycerol phosphate synthase subunit hisF2 (248 aa).

Residue D129 is part of the active site.

The protein belongs to the HisA/HisF family. In terms of assembly, heterodimer of HisH and HisF.

The protein localises to the cytoplasm. It catalyses the reaction 5-[(5-phospho-1-deoxy-D-ribulos-1-ylimino)methylamino]-1-(5-phospho-beta-D-ribosyl)imidazole-4-carboxamide + L-glutamine = D-erythro-1-(imidazol-4-yl)glycerol 3-phosphate + 5-amino-1-(5-phospho-beta-D-ribosyl)imidazole-4-carboxamide + L-glutamate + H(+). Its pathway is amino-acid biosynthesis; L-histidine biosynthesis; L-histidine from 5-phospho-alpha-D-ribose 1-diphosphate: step 5/9. Its function is as follows. IGPS catalyzes the conversion of PRFAR and glutamine to IGP, AICAR and glutamate. The HisF subunit catalyzes the cyclization activity that produces IGP and AICAR from PRFAR using the ammonia provided by the HisH subunit. The polypeptide is Putative imidazole glycerol phosphate synthase subunit hisF2 (hisF2) (Campylobacter jejuni subsp. jejuni serotype O:2 (strain ATCC 700819 / NCTC 11168)).